Reading from the N-terminus, the 154-residue chain is Ribosomal RNA large subunit methyltransferase H (154 aa).

Residue glycine 102 participates in S-adenosyl-L-methionine binding.

This sequence belongs to the RNA methyltransferase RlmH family. As to quaternary structure, homodimer.

The protein localises to the cytoplasm. The catalysed reaction is pseudouridine(1915) in 23S rRNA + S-adenosyl-L-methionine = N(3)-methylpseudouridine(1915) in 23S rRNA + S-adenosyl-L-homocysteine + H(+). In terms of biological role, specifically methylates the pseudouridine at position 1915 (m3Psi1915) in 23S rRNA. This chain is Ribosomal RNA large subunit methyltransferase H, found in Phenylobacterium zucineum (strain HLK1).